The sequence spans 197 residues: Holliday junction branch migration complex subunit RuvA (197 aa).

Residues 1 to 63 (MINKIHGKVI…ENELKLFGFL (63 aa)) are domain I. The domain II stretch occupies residues 64 to 139 (NSDEREIFKE…KLLINSELES (76 aa)). Position 139 (S139) is a region of interest, flexible linker. The tract at residues 140-197 (TGLFRFKELEESIVSMGFDRKIVNSKIREAFNLAEFANLKDSEKEQFLFKEVLKRISN) is domain III.

Belongs to the RuvA family. As to quaternary structure, homotetramer. Forms an RuvA(8)-RuvB(12)-Holliday junction (HJ) complex. HJ DNA is sandwiched between 2 RuvA tetramers; dsDNA enters through RuvA and exits via RuvB. An RuvB hexamer assembles on each DNA strand where it exits the tetramer. Each RuvB hexamer is contacted by two RuvA subunits (via domain III) on 2 adjacent RuvB subunits; this complex drives branch migration. In the full resolvosome a probable DNA-RuvA(4)-RuvB(12)-RuvC(2) complex forms which resolves the HJ.

It localises to the cytoplasm. Functionally, the RuvA-RuvB-RuvC complex processes Holliday junction (HJ) DNA during genetic recombination and DNA repair, while the RuvA-RuvB complex plays an important role in the rescue of blocked DNA replication forks via replication fork reversal (RFR). RuvA specifically binds to HJ cruciform DNA, conferring on it an open structure. The RuvB hexamer acts as an ATP-dependent pump, pulling dsDNA into and through the RuvAB complex. HJ branch migration allows RuvC to scan DNA until it finds its consensus sequence, where it cleaves and resolves the cruciform DNA. The protein is Holliday junction branch migration complex subunit RuvA of Borreliella burgdorferi (strain ATCC 35210 / DSM 4680 / CIP 102532 / B31) (Borrelia burgdorferi).